The primary structure comprises 314 residues: 4-hydroxy-3-methylbut-2-enyl diphosphate reductase (314 aa).

[4Fe-4S] cluster is bound at residue Cys12. The (2E)-4-hydroxy-3-methylbut-2-enyl diphosphate site is built by His41 and His74. Dimethylallyl diphosphate is bound by residues His41 and His74. Isopentenyl diphosphate contacts are provided by His41 and His74. Cys96 provides a ligand contact to [4Fe-4S] cluster. Position 124 (His124) interacts with (2E)-4-hydroxy-3-methylbut-2-enyl diphosphate. His124 lines the dimethylallyl diphosphate pocket. His124 contributes to the isopentenyl diphosphate binding site. The Proton donor role is filled by Glu126. Residue Thr168 coordinates (2E)-4-hydroxy-3-methylbut-2-enyl diphosphate. Cys198 provides a ligand contact to [4Fe-4S] cluster. Residues Ser226, Ser227, Asn228, and Ser270 each coordinate (2E)-4-hydroxy-3-methylbut-2-enyl diphosphate. Dimethylallyl diphosphate is bound by residues Ser226, Ser227, Asn228, and Ser270. Ser226, Ser227, Asn228, and Ser270 together coordinate isopentenyl diphosphate.

It belongs to the IspH family. [4Fe-4S] cluster is required as a cofactor.

The enzyme catalyses isopentenyl diphosphate + 2 oxidized [2Fe-2S]-[ferredoxin] + H2O = (2E)-4-hydroxy-3-methylbut-2-enyl diphosphate + 2 reduced [2Fe-2S]-[ferredoxin] + 2 H(+). It catalyses the reaction dimethylallyl diphosphate + 2 oxidized [2Fe-2S]-[ferredoxin] + H2O = (2E)-4-hydroxy-3-methylbut-2-enyl diphosphate + 2 reduced [2Fe-2S]-[ferredoxin] + 2 H(+). It functions in the pathway isoprenoid biosynthesis; dimethylallyl diphosphate biosynthesis; dimethylallyl diphosphate from (2E)-4-hydroxy-3-methylbutenyl diphosphate: step 1/1. The protein operates within isoprenoid biosynthesis; isopentenyl diphosphate biosynthesis via DXP pathway; isopentenyl diphosphate from 1-deoxy-D-xylulose 5-phosphate: step 6/6. In terms of biological role, catalyzes the conversion of 1-hydroxy-2-methyl-2-(E)-butenyl 4-diphosphate (HMBPP) into a mixture of isopentenyl diphosphate (IPP) and dimethylallyl diphosphate (DMAPP). Acts in the terminal step of the DOXP/MEP pathway for isoprenoid precursor biosynthesis. This is 4-hydroxy-3-methylbut-2-enyl diphosphate reductase from Pseudomonas aeruginosa (strain LESB58).